The following is a 403-amino-acid chain: Argininosuccinate synthase (403 aa).

ATP is bound at residue 9–17 (AYSGGLDTS). Tyr-86 is an L-citrulline binding site. Gly-116 lines the ATP pocket. Thr-118, Asn-122, and Asp-123 together coordinate L-aspartate. Residue Asn-122 participates in L-citrulline binding. 4 residues coordinate L-citrulline: Arg-126, Ser-174, Glu-259, and Tyr-271.

This sequence belongs to the argininosuccinate synthase family. Type 1 subfamily. In terms of assembly, homotetramer.

It is found in the cytoplasm. The enzyme catalyses L-citrulline + L-aspartate + ATP = 2-(N(omega)-L-arginino)succinate + AMP + diphosphate + H(+). Its pathway is amino-acid biosynthesis; L-arginine biosynthesis; L-arginine from L-ornithine and carbamoyl phosphate: step 2/3. In Ligilactobacillus salivarius (strain UCC118) (Lactobacillus salivarius), this protein is Argininosuccinate synthase.